A 633-amino-acid polypeptide reads, in one-letter code: Basic helix-loop-helix ARNT-like protein 1 (633 aa).

The interval 1–65 (MADQRMDISS…GMDTDKDDQH (65 aa)) is disordered. The residue at position 17 (Ser-17) is a Phosphoserine; by GSK3-beta. The segment covering 24–33 (ISSSLSTSGM) has biased composition (polar residues). Positions 36-41 (NRKRKG) match the Nuclear localization signal motif. The bHLH domain occupies 79–132 (NAREAHSQIEKRRRDKMNSFIDELASLVPTCNAMSRKLDKLTVLRMAVQHMKTL). Ser-85 bears the Phosphoserine mark. Position 97 is a phosphoserine; by CK2 (Ser-97). Residues 149-159 (LSDDELKHLIL) carry the Nuclear export signal 1 motif. The PAS 1 domain maps to 150–222 (SDDELKHLIL…EQLSSSDTAP (73 aa)). Lys-259 participates in a covalent cross-link: Glycyl lysine isopeptide (Lys-Gly) (interchain with G-Cter in SUMO2 and SUMO3). Lys-266 participates in a covalent cross-link: Glycyl lysine isopeptide (Lys-Gly) (interchain with G-Cter in SUMO). The PAS 2 domain maps to 333 to 403 (PQPVNGEIRV…ECHRQVLQTR (71 aa)). The short motif at 368-376 (LAYLPQELL) is the Nuclear export signal 2 element. Residues 408–451 (TNCYKFKIKDGSFITLRSRWFSFMNPWTKEVEYIVSTNTVVSTN) form the PAC domain. 2 disordered regions span residues 472 to 499 (SVLQ…RAGA) and 518 to 555 (GSSP…TPDI). A compositionally biased stretch (low complexity) spans 518 to 528 (GSSPSSCGSSP). N6-acetyllysine is present on Lys-545.

As to quaternary structure, component of the circadian clock oscillator which includes the CRY1/2 proteins, CLOCK or NPAS2, BMAL1 or BMAL2, CSNK1D and/or CSNK1E, TIMELESS and the PER1/2/3 proteins. Forms a heterodimer with CLOCK. The CLOCK-BMAL1 heterodimer is required for E-box-dependent transactivation, for CLOCK nuclear translocation and degradation, and, for phosphorylation of both CLOCK and BMAL1. Interacts with PER1, PER2, CRY1 and CRY2 and this interaction requires a translocation to the nucleus. Interaction of the CLOCK-BMAL1 heterodimer with PER or CRY inhibits transcription activation. Post-translationally, ubiquitinated, leading to its proteasomal degradation. Deubiquitinated by USP9X. O-glycosylated; contains O-GlcNAc. O-glycosylation by OGT prevents protein degradation by inhibiting ubiquitination. It also stabilizes the CLOCK-BMAL1 heterodimer thereby increasing CLOCK-BMAL1-mediated transcription of genes in the negative loop of the circadian clock such as PER1/2/3 and CRY1/2. In terms of processing, acetylated on Lys-545 by CLOCK during the repression phase of the circadian cycle. Acetylation facilitates recruitment of CRY1 protein and initiates the repression phase of the circadian cycle. Acetylated at Lys-545 by KAT5 during the activation phase of the cycle, leading to recruitment of the positive transcription elongation factor b (P-TEFb) and BRD4, followed by productive elongation of circadian transcripts. Deacetylated by SIRT1, which may result in decreased protein stability. Post-translationally, phosphorylated upon dimerization with CLOCK. Phosphorylation enhances the transcriptional activity, alters the subcellular localization and decreases the stability of the CLOCK-BMAL1 heterodimer by promoting its degradation. Phosphorylation shows circadian variations in the liver with a peak between CT10 to CT14. Phosphorylation at Ser-97 by CK2 is essential for its nuclear localization, its interaction with CLOCK and controls CLOCK nuclear entry. Dephosphorylation at Ser-85 is important for dimerization with CLOCK and transcriptional activity. Sumoylated on Lys-266 upon dimerization with CLOCK. Predominantly conjugated to poly-SUMO2/3 rather than SUMO1 and the level of these conjugates undergo rhythmic variation, peaking at CT9-CT12. Sumoylation localizes it exclusively to the PML body and promotes its ubiquitination in the PML body, ubiquitin-dependent proteasomal degradation and the transcriptional activity of the CLOCK-BMAL1 heterodimer. In terms of processing, undergoes lysosome-mediated degradation in a time-dependent manner in the liver.

The protein resides in the nucleus. The protein localises to the cytoplasm. Its subcellular location is the PML body. Its function is as follows. Transcriptional activator which forms a core component of the circadian clock. The circadian clock, an internal time-keeping system, regulates various physiological processes through the generation of approximately 24 hour circadian rhythms in gene expression, which are translated into rhythms in metabolism and behavior. It is derived from the Latin roots 'circa' (about) and 'diem' (day) and acts as an important regulator of a wide array of physiological functions including metabolism, sleep, body temperature, blood pressure, endocrine, immune, cardiovascular, and renal function. Consists of two major components: the central clock, residing in the suprachiasmatic nucleus (SCN) of the brain, and the peripheral clocks that are present in nearly every tissue and organ system. Both the central and peripheral clocks can be reset by environmental cues, also known as Zeitgebers (German for 'timegivers'). The predominant Zeitgeber for the central clock is light, which is sensed by retina and signals directly to the SCN. The central clock entrains the peripheral clocks through neuronal and hormonal signals, body temperature and feeding-related cues, aligning all clocks with the external light/dark cycle. Circadian rhythms allow an organism to achieve temporal homeostasis with its environment at the molecular level by regulating gene expression to create a peak of protein expression once every 24 hours to control when a particular physiological process is most active with respect to the solar day. Transcription and translation of core clock components (CLOCK, NPAS2, BMAL1, BMAL2, PER1, PER2, PER3, CRY1 and CRY2) plays a critical role in rhythm generation, whereas delays imposed by post-translational modifications (PTMs) are important for determining the period (tau) of the rhythms (tau refers to the period of a rhythm and is the length, in time, of one complete cycle). A diurnal rhythm is synchronized with the day/night cycle, while the ultradian and infradian rhythms have a period shorter and longer than 24 hours, respectively. Disruptions in the circadian rhythms contribute to the pathology of cardiovascular diseases, cancer, metabolic syndromes and aging. A transcription/translation feedback loop (TTFL) forms the core of the molecular circadian clock mechanism. Transcription factors, CLOCK or NPAS2 and BMAL1 or BMAL2, form the positive limb of the feedback loop, act in the form of a heterodimer and activate the transcription of core clock genes and clock-controlled genes (involved in key metabolic processes), harboring E-box elements (5'-CACGTG-3') within their promoters. The core clock genes: PER1/2/3 and CRY1/2 which are transcriptional repressors form the negative limb of the feedback loop and interact with the CLOCK|NPAS2-BMAL1|BMAL2 heterodimer inhibiting its activity and thereby negatively regulating their own expression. This heterodimer also activates nuclear receptors NR1D1/2 and RORA/B/G, which form a second feedback loop and which activate and repress BMAL1 transcription, respectively. The preferred binding motif for the CLOCK-BMAL1 heterodimer is 5'-CACGTGA-3', which contains a flanking adenine nucleotide at the 3-prime end of the canonical 6-nucleotide E-box sequence. CLOCK specifically binds to the half-site 5'-CAC-3', while BMAL1 binds to the half-site 5'-GTGA-3'. Essential for the rhythmic interaction of CLOCK with ASS1 and plays a critical role in positively regulating CLOCK-mediated acetylation of ASS1. Plays a role in protecting against lethal sepsis by limiting the expression of immune checkpoint protein CD274 in macrophages in a PKM2-dependent manner. In Tyto alba (Barn owl), this protein is Basic helix-loop-helix ARNT-like protein 1 (BMAL1).